We begin with the raw amino-acid sequence, 140 residues long: FAD synthase (140 aa).

Residues 10–11 (TF), 15–18 (HPGH), and Asn-93 contribute to the ATP site.

The protein belongs to the archaeal FAD synthase family. Homodimer. It depends on a divalent metal cation as a cofactor.

The catalysed reaction is FMN + ATP + H(+) = FAD + diphosphate. It participates in cofactor biosynthesis; FAD biosynthesis; FAD from FMN: step 1/1. In terms of biological role, catalyzes the transfer of the AMP portion of ATP to flavin mononucleotide (FMN) to produce flavin adenine dinucleotide (FAD) coenzyme. This Methanocella arvoryzae (strain DSM 22066 / NBRC 105507 / MRE50) protein is FAD synthase.